The sequence spans 444 residues: Alpha-N-acetylgalactosaminidase (444 aa).

NAD(+)-binding positions include 30 to 31 (LR), D52, N80, 101 to 104 (WEWH), H107, 121 to 122 (EV), and N150. A substrate-binding site is contributed by Y179. 208–212 (SEAKW) is a binding site for NAD(+). Substrate-binding positions include R213, 225–228 (YPTH), and Y307. Y225 serves as a coordination point for NAD(+).

Belongs to the Gfo/Idh/MocA family. Glycosyl hydrolase 109 subfamily. Requires NAD(+) as cofactor.

It catalyses the reaction Cleavage of non-reducing alpha-(1-&gt;3)-N-acetylgalactosamine residues from human blood group A and AB mucin glycoproteins, Forssman hapten and blood group A lacto series glycolipids.. In terms of biological role, glycosidase that has specific alpha-N-acetylgalactosaminidase activity. The chain is Alpha-N-acetylgalactosaminidase (nagA) from Elizabethkingia meningoseptica (Chryseobacterium meningosepticum).